A 445-amino-acid polypeptide reads, in one-letter code: Phosphoglucosamine mutase (445 aa).

Catalysis depends on serine 102, which acts as the Phosphoserine intermediate. Mg(2+) is bound by residues serine 102, aspartate 241, aspartate 243, and aspartate 245. Position 102 is a phosphoserine (serine 102).

The protein belongs to the phosphohexose mutase family. Requires Mg(2+) as cofactor. Post-translationally, activated by phosphorylation.

The enzyme catalyses alpha-D-glucosamine 1-phosphate = D-glucosamine 6-phosphate. Its function is as follows. Catalyzes the conversion of glucosamine-6-phosphate to glucosamine-1-phosphate. In Escherichia coli O7:K1 (strain IAI39 / ExPEC), this protein is Phosphoglucosamine mutase.